A 217-amino-acid polypeptide reads, in one-letter code: Growth hormone variant (217 aa).

Residues 1-26 (MAAGSRTSLLLAFGLLCLSWLQEGSA) form the signal peptide. Disulfide bonds link cysteine 79-cysteine 191 and cysteine 208-cysteine 215. At serine 132 the chain carries Phosphoserine. N-linked (GlcNAc...) asparagine glycosylation occurs at asparagine 166. Serine 176 is modified (phosphoserine).

This sequence belongs to the somatotropin/prolactin family. As to quaternary structure, monomer, dimer, trimer, tetramer and pentamer, disulfide-linked or non-covalently associated, in homomeric and heteromeric combinations. Can also form a complex either with GHBP or with the alpha2-macroglobulin complex. Expressed in the placenta.

The protein resides in the secreted. Its function is as follows. Plays an important role in growth control. Its major role in stimulating body growth is to stimulate the liver and other tissues to secrete IGF1. It stimulates both the differentiation and proliferation of myoblasts. It also stimulates amino acid uptake and protein synthesis in muscle and other tissues. This is Growth hormone variant (GH2) from Homo sapiens (Human).